The following is a 167-amino-acid chain: MNNIAPQSPVMRRLTLQDNPAIARVIRQVSAEYGLTADKGYTVADPNLDELYQVYSQPGHAYWVVEYEGEVVGGGGIAPLTGSESDICELQKMYFLPAIRGKGLAKKLALMAMEQAREMGFKRCYLETTAFLKEAIALYEHLGFEHIDYALGCTGHVDCEVRMLREL.

The N-acetyltransferase domain maps to 9-167; sequence PVMRRLTLQD…DCEVRMLREL (159 aa).

The protein belongs to the acetyltransferase family.

This is an uncharacterized protein from Escherichia coli (strain K12).